The primary structure comprises 71 residues: Palustrin-2AJ2 (71 aa).

An N-terminal signal peptide occupies residues 1–22 (MFTLKKPLLVLLFLGTVSLSLC). Positions 23–40 (EQERAADDDEGEVIEEEV) are excised as a propeptide. Cysteine 65 and cysteine 71 are oxidised to a cystine.

Expressed by the skin glands.

The protein resides in the secreted. In terms of biological role, displays broad-spectrum antibacterial activity against a range of Gram-positive and Gram-negative bacteria. Has low hemolytic activity, low cytotoxicity and low antioxidant activity. This is Palustrin-2AJ2 from Amolops jingdongensis (Chinese torrent frog).